Reading from the N-terminus, the 974-residue chain is MPRDREYDQWGYSGTRRDGGGRYGYRDRSRDERDRFRDVRDRDRDRDRDRERDRGGYRQDPRDRRYSRSRERERRGSGSRDRSRDRSRDRSRDAHRPPPSGRPHQPSGHDSTKSSNSMSETSSTSQVTGTTPNTTNATPSQAEIDAKKAAKLAKVAEWKRKKELERSKSASASPAPSTAPASPKAGFSMSGLSGLRKATDQGQVKRKMFFGGDSDEEDAGRKPAKLLKKLGEKEGSGKSEGKGRGGSQSEAKNASEKNGAASEPAEVDPLDAYMSSLTLPTTTSVSIADSTPLENLNVWEQVDTLEKSQDPTLDLSALSKRKEIAIVDHSKQVYEDFRRQFYVESSELADMTEAETNELRLSLDGIKIRGKDCPKPISKWTQLGLPGPTMGVLNDLRYDKPTSIQAQAIPAVMSGRDVISVAKTGSGKTLAFLLPMLRHIKHRVGVETHTTTLSGASSHPLGVIITPTRELCVQIYRDLRPFLAALELTAVCAYGGSPIKDQIAALKKGTHIIVCTPGRMIDLLAANQGRVLSLSRVTFLVIDEADRMFDMGFEPQVLKLTQSIRPDRQTVLFSATFPKKMEQLARRVLSKRSSDSLGPIEIIVGARSVVASEITQFVEVFQNEKSKFPRLLEVLGKYFAQGFFDEQSEGRVGTGESAATPIPNPKCLIFVERQESADSLLKELIQSGYPCLSIHGGKEQADRDQAISDFKSGLVSVLIATSVAARGLDVKGLGLVVNWDSPNHMEDYVHRVGRTGRAGQKGTALTFLLSDQERLAAEISRAIKSSGNAPPAPVQLMTERFEFKVRSGTEKRHMYGFSGKGLERLQDERDATREHERRAYEGDEAGEAETESSTPAASTANTDIIPKPVIVVTPPDSKSPTTAYHTTLQINDFPQQARYRASSNTSVSRVIANTGCSITAKGEYYPPGRIPGPKDEPKLFILIEGTSERAVKLAHHELSELLVSGLVKGARYQV.

The interval 1–267 (MPRDREYDQW…NGAASEPAEV (267 aa)) is disordered. Over residues 15–96 (TRRDGGGRYG…SRDRSRDAHR (82 aa)) the composition is skewed to basic and acidic residues. The segment covering 113 to 142 (KSSNSMSETSSTSQVTGTTPNTTNATPSQA) has biased composition (low complexity). The segment covering 144–168 (IDAKKAAKLAKVAEWKRKKELERSK) has biased composition (basic and acidic residues). Positions 169–185 (SASASPAPSTAPASPKA) are enriched in low complexity. The segment covering 229–243 (KLGEKEGSGKSEGKG) has biased composition (basic and acidic residues). Residues 378-406 (SKWTQLGLPGPTMGVLNDLRYDKPTSIQA) carry the Q motif motif. A Helicase ATP-binding domain is found at 409-595 (IPAVMSGRDV…RRVLSKRSSD (187 aa)). 422–429 (AKTGSGKT) provides a ligand contact to ATP. The short motif at 543 to 546 (DEAD) is the DEAD box element. The Helicase C-terminal domain maps to 654-800 (TGESAATPIP…PAPVQLMTER (147 aa)). Residues 815 to 867 (YGFSGKGLERLQDERDATREHERRAYEGDEAGEAETESSTPAASTANTDIIPK) form a disordered region. The segment covering 821-841 (GLERLQDERDATREHERRAYE) has biased composition (basic and acidic residues). The segment covering 851-862 (ESSTPAASTANT) has biased composition (polar residues).

Belongs to the DEAD box helicase family. DDX46/PRP5 subfamily.

Its subcellular location is the nucleus. It catalyses the reaction ATP + H2O = ADP + phosphate + H(+). ATP-dependent RNA helicase involved spliceosome assembly and in nuclear splicing. Catalyzes an ATP-dependent conformational change of U2 snRNP. Bridges U1 and U2 snRNPs and enables stable U2 snRNP association with intron RNA. The polypeptide is Pre-mRNA-processing ATP-dependent RNA helicase PRP5 (PRP5) (Yarrowia lipolytica (strain CLIB 122 / E 150) (Yeast)).